Consider the following 72-residue polypeptide: Large ribosomal subunit protein bL28 (72 aa).

Belongs to the bacterial ribosomal protein bL28 family.

The polypeptide is Large ribosomal subunit protein bL28 (Chlorobaculum parvum (strain DSM 263 / NCIMB 8327) (Chlorobium vibrioforme subsp. thiosulfatophilum)).